Reading from the N-terminus, the 486-residue chain is MITTEIKRVKNHINGEWVESTGTEVEAVPNPATGKIIAYVPLSPKEDVEKAVEAAKAAYETWSKVPVPNRSRQLYKYLQLLQENKEELAKIITLENGKTLTDATGEVQRGIEAVELATSTPNLMMGQALPNIASGIDGSIWRYPIGVVAGITPFNFPMMIPLWMFPLAIACGNTFVLKTSERTPLLAERLVELFYEAGFPKGVLNLVQGGKDVVNSILENKDIQAVSFVGSEPVARYVYETGTKHGKRVQALAGAKNHAIVMPDCNLEKTVQGVIGSAFASSGERCMACSVVAVVDEIADEFIDVLVAETKKLKVGDGFHEDNYVGPLIRESHKERVLGYINSGVADGATLLVDGRKIKEEVGDGYFVGATIFDGVNQEMKIWQDEIFAPVLSIVRVKDLEEGIKLTNQSKFANGAVIYTSNGKHAQTFRDNIDAGMIGVNVNVPAPMAFFAFAGNKASFFGDLGTNGTDGVQFYTRKKVVTERWF.

Residues Phe154, Lys178, Glu181, Arg182, and Ser231 each contribute to the NAD(+) site. The active-site Nucleophile is Cys286. Glu386 contributes to the NAD(+) binding site.

It belongs to the aldehyde dehydrogenase family. IolA subfamily. Homotetramer.

The enzyme catalyses 3-oxopropanoate + NAD(+) + CoA + H2O = hydrogencarbonate + acetyl-CoA + NADH + H(+). It catalyses the reaction 2-methyl-3-oxopropanoate + NAD(+) + CoA + H2O = propanoyl-CoA + hydrogencarbonate + NADH + H(+). Its pathway is polyol metabolism; myo-inositol degradation into acetyl-CoA; acetyl-CoA from myo-inositol: step 7/7. Functionally, catalyzes the oxidation of malonate semialdehyde (MSA) and methylmalonate semialdehyde (MMSA) into acetyl-CoA and propanoyl-CoA, respectively. Is involved in a myo-inositol catabolic pathway. Bicarbonate, and not CO2, is the end-product of the enzymatic reaction. This chain is Malonate-semialdehyde dehydrogenase, found in Bacillus cereus (strain ATCC 10987 / NRS 248).